We begin with the raw amino-acid sequence, 380 residues long: Aminomethyltransferase (380 aa).

It belongs to the GcvT family. As to quaternary structure, the glycine cleavage system is composed of four proteins: P, T, L and H.

It catalyses the reaction N(6)-[(R)-S(8)-aminomethyldihydrolipoyl]-L-lysyl-[protein] + (6S)-5,6,7,8-tetrahydrofolate = N(6)-[(R)-dihydrolipoyl]-L-lysyl-[protein] + (6R)-5,10-methylene-5,6,7,8-tetrahydrofolate + NH4(+). In terms of biological role, the glycine cleavage system catalyzes the degradation of glycine. The polypeptide is Aminomethyltransferase (Koribacter versatilis (strain Ellin345)).